A 238-amino-acid polypeptide reads, in one-letter code: Ribonuclease PH (238 aa).

Phosphate is bound by residues Arg86 and Gly124–Arg126.

This sequence belongs to the RNase PH family. Homohexameric ring arranged as a trimer of dimers.

It catalyses the reaction tRNA(n+1) + phosphate = tRNA(n) + a ribonucleoside 5'-diphosphate. Phosphorolytic 3'-5' exoribonuclease that plays an important role in tRNA 3'-end maturation. Removes nucleotide residues following the 3'-CCA terminus of tRNAs; can also add nucleotides to the ends of RNA molecules by using nucleoside diphosphates as substrates, but this may not be physiologically important. Probably plays a role in initiation of 16S rRNA degradation (leading to ribosome degradation) during starvation. The sequence is that of Ribonuclease PH from Aliivibrio fischeri (strain ATCC 700601 / ES114) (Vibrio fischeri).